A 358-amino-acid polypeptide reads, in one-letter code: Phospho-N-acetylmuramoyl-pentapeptide-transferase (358 aa).

The next 10 helical transmembrane spans lie at 26–46 (TIYAMITALIVCFVLGPWIIR), 71–91 (TPTMGGLIILTAIILPTLLWA), 93–113 (LTNVYIWLTLFIIVGYGLIGF), 134–154 (MFWQVLLAGGVAVFLYVTPGF), 170–190 (LGIFFIPFVTLVIVGASNAVN), 197–217 (GLAIGPVAINAATYMLFAYVA), 234–254 (AGELAVICGAMVGAGLGFLWF), 261–281 (VFMGDVGSLSLGGTLGVIAVL), 286–306 (ILLVIVGGIFVIEALSVIFQV), and 335–355 (KIIVRFWIITIILALVAISTL).

It belongs to the glycosyltransferase 4 family. MraY subfamily. Mg(2+) is required as a cofactor.

Its subcellular location is the cell inner membrane. The catalysed reaction is UDP-N-acetyl-alpha-D-muramoyl-L-alanyl-gamma-D-glutamyl-meso-2,6-diaminopimeloyl-D-alanyl-D-alanine + di-trans,octa-cis-undecaprenyl phosphate = di-trans,octa-cis-undecaprenyl diphospho-N-acetyl-alpha-D-muramoyl-L-alanyl-D-glutamyl-meso-2,6-diaminopimeloyl-D-alanyl-D-alanine + UMP. Its pathway is cell wall biogenesis; peptidoglycan biosynthesis. In terms of biological role, catalyzes the initial step of the lipid cycle reactions in the biosynthesis of the cell wall peptidoglycan: transfers peptidoglycan precursor phospho-MurNAc-pentapeptide from UDP-MurNAc-pentapeptide onto the lipid carrier undecaprenyl phosphate, yielding undecaprenyl-pyrophosphoryl-MurNAc-pentapeptide, known as lipid I. The polypeptide is Phospho-N-acetylmuramoyl-pentapeptide-transferase (Trichlorobacter lovleyi (strain ATCC BAA-1151 / DSM 17278 / SZ) (Geobacter lovleyi)).